A 427-amino-acid chain; its full sequence is 4-hydroxy-3-methylbut-2-en-1-yl diphosphate synthase (flavodoxin) (427 aa).

The interval 1 to 21 (MNKLENTIDSDIAGPAPRHRT) is disordered. Residues C310, C313, C356, and E363 each coordinate [4Fe-4S] cluster.

It belongs to the IspG family. Requires [4Fe-4S] cluster as cofactor.

It carries out the reaction (2E)-4-hydroxy-3-methylbut-2-enyl diphosphate + oxidized [flavodoxin] + H2O + 2 H(+) = 2-C-methyl-D-erythritol 2,4-cyclic diphosphate + reduced [flavodoxin]. The protein operates within isoprenoid biosynthesis; isopentenyl diphosphate biosynthesis via DXP pathway; isopentenyl diphosphate from 1-deoxy-D-xylulose 5-phosphate: step 5/6. Functionally, converts 2C-methyl-D-erythritol 2,4-cyclodiphosphate (ME-2,4cPP) into 1-hydroxy-2-methyl-2-(E)-butenyl 4-diphosphate. The sequence is that of 4-hydroxy-3-methylbut-2-en-1-yl diphosphate synthase (flavodoxin) from Bradyrhizobium diazoefficiens (strain JCM 10833 / BCRC 13528 / IAM 13628 / NBRC 14792 / USDA 110).